A 250-amino-acid chain; its full sequence is UDP-2,3-diacylglucosamine hydrolase (250 aa).

5 residues coordinate Mn(2+): aspartate 8, histidine 10, aspartate 41, asparagine 79, and histidine 114. Substrate is bound at residue asparagine 79–arginine 80. Aspartate 122, serine 160, glutamine 167, and histidine 195 together coordinate substrate. Positions 195 and 197 each coordinate Mn(2+).

The protein belongs to the LpxH family. Mn(2+) is required as a cofactor.

Its subcellular location is the cell inner membrane. The enzyme catalyses UDP-2-N,3-O-bis[(3R)-3-hydroxytetradecanoyl]-alpha-D-glucosamine + H2O = 2-N,3-O-bis[(3R)-3-hydroxytetradecanoyl]-alpha-D-glucosaminyl 1-phosphate + UMP + 2 H(+). It participates in glycolipid biosynthesis; lipid IV(A) biosynthesis; lipid IV(A) from (3R)-3-hydroxytetradecanoyl-[acyl-carrier-protein] and UDP-N-acetyl-alpha-D-glucosamine: step 4/6. Its function is as follows. Hydrolyzes the pyrophosphate bond of UDP-2,3-diacylglucosamine to yield 2,3-diacylglucosamine 1-phosphate (lipid X) and UMP by catalyzing the attack of water at the alpha-P atom. Involved in the biosynthesis of lipid A, a phosphorylated glycolipid that anchors the lipopolysaccharide to the outer membrane of the cell. This Nitrosococcus oceani (strain ATCC 19707 / BCRC 17464 / JCM 30415 / NCIMB 11848 / C-107) protein is UDP-2,3-diacylglucosamine hydrolase.